A 768-amino-acid polypeptide reads, in one-letter code: Translation initiation factor IF-2, chloroplastic (768 aa).

Disordered regions lie at residues M1 to N20, K54 to S77, and K155 to S176. A compositionally biased stretch (basic and acidic residues) spans K54–L65. The span at T160–S176 shows a compositional bias: polar residues. The tr-type G domain maps to K261 to K434. GTP-binding positions include G270–T277, D320–H324, and S374–D377.

This sequence belongs to the TRAFAC class translation factor GTPase superfamily. Classic translation factor GTPase family. IF-2 subfamily.

It localises to the plastid. Its subcellular location is the chloroplast. One of the essential components for the initiation of protein synthesis. Protects formylmethionyl-tRNA from spontaneous hydrolysis and promotes its binding to the 30S ribosomal subunits. Also involved in the hydrolysis of GTP during the formation of the 70S ribosomal complex. The polypeptide is Translation initiation factor IF-2, chloroplastic (infB) (Pyropia yezoensis (Susabi-nori)).